A 295-amino-acid polypeptide reads, in one-letter code: Adrenocorticotropic hormone receptor (295 aa).

Topologically, residues 1–23 (MRHILNLYENINSTARNNSDCPA) are extracellular. N-linked (GlcNAc...) asparagine glycans are attached at residues Asn-12 and Asn-17. Disulfide bonds link Cys-21/Cys-253 and Cys-245/Cys-251. A helical membrane pass occupies residues 24–49 (VILPEEIFFTVSIVGVLENLMVLLAV). Over 50–58 (AKNKSLQSP) the chain is Cytoplasmic. Residues 59–79 (MYFFICSLAISDMLGSLYKIL) form a helical membrane-spanning segment. Residues 80–104 (ENVLIMFRNMGYLEPRGSFESTADD) lie on the Extracellular side of the membrane. A helical transmembrane segment spans residues 105–126 (VVDSLFILSLLGSICSLSVIAA). The Cytoplasmic portion of the chain corresponds to 127–147 (DRYITIFHALQYHSIVTMHRA). A helical transmembrane segment spans residues 148 to 168 (LVVLTVLWAGCTGSGITIVTF). The Extracellular segment spans residues 169-180 (SHHVPTVIAFTA). The chain crosses the membrane as a helical span at residues 181–199 (LFPLMLAFILCLYVHMFLL). Residues 200–217 (ARSHARRTSSLPKANMRG) are Cytoplasmic-facing. A helical transmembrane segment spans residues 218-244 (AITLTVLLGVFIFCWAPFVLHVLLMTF). The Extracellular portion of the chain corresponds to 245–256 (CPADPYCACYMS). A helical transmembrane segment spans residues 257–278 (LFQVNGVLIMCNAVIDPFIYAF). The Cytoplasmic portion of the chain corresponds to 279–295 (RSPELRVAFKKMVICNW). A lipid anchor (S-palmitoyl cysteine) is attached at Cys-293.

The protein belongs to the G-protein coupled receptor 1 family. As to quaternary structure, homodimer. Interacts with corticotropin (ACTH). Interacts with MRAP; this interaction targets MC2R to the plasma membrane. Interacts with MRAP2; competing with MRAP for binding to MC2R and impairing the binding of corticotropin (ACTH). In terms of processing, ubiquitinated by MGRN1 that may be involved in post-endocytic trafficking and/or degradation of internalized receptor.

It is found in the cell membrane. Functionally, hormone receptor primarily expressed in adrenal cortex that plays a key role in regulating adrenocortical function. Upon corticotropin (ACTH) binding, facilitates the release of adrenal glucocorticoids, including cortisol and corticosterone. In addition, MC2R is required for fetal and neonatal adrenal gland development. Mechanistically, activates adenylate cyclase (cAMP), the MAPK cascade as well as the cAMP-dependent protein kinase A pathway leading to steroidogenic factor 1/NR5A1-mediated transcriptional activation. In Ovis aries (Sheep), this protein is Adrenocorticotropic hormone receptor (MC2R).